The sequence spans 877 residues: MNEKYAALRANVGMLGQLLGKSIKDHQGQAFLDKIETIRQLAKSSRKGNEADRERLLETLRTLSDDELLPVARAFSQFLNLANVAEQFHTISRRCEEQVCTPDPLEQMFAKLKASNLSQEAIIQAVRELDIDLVLTAHPTEVTRRTLIHKHVQLNDCLEALELSDLLPRERDKILNRIEQLVNQAWHTNEIREQRPTPVDEAKWGFAVVENSLWPAIPEFMRNLDERLQQHLGVRLPLDAAPVKFTSWMGGDRDGNPFVTAKVTAEVLELGRWMAVSLFYKDIKELTSELSMSDCTDAVRERVGDHPEPYRALVRELREALRETQEYLTAKVQGQVSESRDLITTTAQLREPLELCYHSMHACGMGNIADGMLLDVLRKLACFGIHLVKLDIRQDGERHGQVFSELTRYLGMGDYAEWSEDDKQAFLLNELNSRRPLIPTDWEPSDETRETIDTCRVIAQHDPDAFGIYIISMAGAPSDVLAVQLLLKEAGCKFRMPVAPLFETQEDLMAGTAVMERLLSVDWYRGYIQGRQYVMIGYSDSAKDAGMMAAGWAQYAAMESLVALAEASNLRLTLFHGRGGTVGRGGAPAHQAILSQPPGSLRGGLRVTEQGEMIRFKFGLPKVAIHSLNLYTSAVLEGNLLPPPKPKESWRAVMEQLATVSCDHYRSIVRGHPDFVPYFRAATPEMELGKLPLGSRPAKRKPNGGVESLRAIPWIFAWTQNRLMLPAWLGAHKGLEHAITDGQKSVLEEMSRQWPFFRTRLEMLEMVFLKADLWLAEYYDTRLVPQELWNLGKQLRQELADAIQIVLQLRPQGDLLDDQPWIKESINLRNPYTDPLNVLQVELLGRSRSHTETLHPELDQALMVTIAGIAAGMRNTG.

Catalysis depends on residues His138 and Lys543.

It belongs to the PEPCase type 1 family. The cofactor is Mg(2+).

It catalyses the reaction oxaloacetate + phosphate = phosphoenolpyruvate + hydrogencarbonate. Functionally, forms oxaloacetate, a four-carbon dicarboxylic acid source for the tricarboxylic acid cycle. The chain is Phosphoenolpyruvate carboxylase from Aeromonas salmonicida (strain A449).